The primary structure comprises 68 residues: Putative membrane protein insertion efficiency factor (68 aa).

This sequence belongs to the UPF0161 family.

It localises to the cell inner membrane. Its function is as follows. Could be involved in insertion of integral membrane proteins into the membrane. The protein is Putative membrane protein insertion efficiency factor of Hydrogenobaculum sp. (strain Y04AAS1).